Here is a 159-residue protein sequence, read N- to C-terminus: 6,7-dimethyl-8-ribityllumazine synthase (159 aa).

5-amino-6-(D-ribitylamino)uracil-binding positions include F22, 57–59, and 81–83; these read AVE and AVI. 86–87 contributes to the (2S)-2-hydroxy-3-oxobutyl phosphate binding site; it reads GT. The active-site Proton donor is the H89. F114 is a 5-amino-6-(D-ribitylamino)uracil binding site. R128 lines the (2S)-2-hydroxy-3-oxobutyl phosphate pocket.

Belongs to the DMRL synthase family. As to quaternary structure, forms an icosahedral capsid composed of 60 subunits, arranged as a dodecamer of pentamers.

It carries out the reaction (2S)-2-hydroxy-3-oxobutyl phosphate + 5-amino-6-(D-ribitylamino)uracil = 6,7-dimethyl-8-(1-D-ribityl)lumazine + phosphate + 2 H2O + H(+). It functions in the pathway cofactor biosynthesis; riboflavin biosynthesis; riboflavin from 2-hydroxy-3-oxobutyl phosphate and 5-amino-6-(D-ribitylamino)uracil: step 1/2. Functionally, catalyzes the formation of 6,7-dimethyl-8-ribityllumazine by condensation of 5-amino-6-(D-ribitylamino)uracil with 3,4-dihydroxy-2-butanone 4-phosphate. This is the penultimate step in the biosynthesis of riboflavin. The sequence is that of 6,7-dimethyl-8-ribityllumazine synthase from Shewanella denitrificans (strain OS217 / ATCC BAA-1090 / DSM 15013).